A 142-amino-acid chain; its full sequence is Probable signal recognition particle 19 kDa protein (142 aa).

Positions K115–K142 are disordered. Positions A123–G135 are enriched in low complexity.

It belongs to the SRP19 family. Component of a signal recognition particle complex that consists of a 7SL RNA molecule of 300 nucleotides and six protein subunits: srpa-72, srpa-68, SRP54, F37F2.2/SRP19, F25G6.8/SRP14 and ZK512.4/SRP9.

It is found in the cytoplasm. The protein resides in the nucleus. It localises to the nucleolus. Functionally, component of the signal recognition particle (SRP) complex, a ribonucleoprotein complex that mediates the cotranslational targeting of secretory and membrane proteins to the endoplasmic reticulum (ER). Binds directly to 7SL RNA. Mediates binding of SRP54 to the SRP complex. The sequence is that of Probable signal recognition particle 19 kDa protein from Caenorhabditis elegans.